Consider the following 196-residue polypeptide: Heat shock protein beta-8 (196 aa).

Positions 1–35 (MADGQMPFSCHYPSRLRRDPFRDSPLPSRLLDDDF) are disordered. Phosphoserine is present on residues serine 24 and serine 57. Threonine 63 carries the phosphothreonine modification. 2 positions are modified to asymmetric dimethylarginine: arginine 71 and arginine 78. One can recognise a sHSP domain in the interval 74-185 (TAAARFGVPA…PFGESNFNNE (112 aa)). Serine 87 bears the Phosphoserine mark. Positions 176–196 (PFGESNFNNELPQDSQEVTCT) are disordered. Polar residues predominate over residues 178-196 (GESNFNNELPQDSQEVTCT).

The protein belongs to the small heat shock protein (HSP20) family. In terms of assembly, monomer. Forms a ternary complex with BAG3 and HSPA1A. Component of the chaperone-assisted selective autophagy (CASA) complex consisting of BAG3, HSPA8/HSC70, HSPB8 and STUB1/CHIP. Interacts with HSPB1. Interacts with DNAJB6. Interacts with BAG3. Phosphorylated.

Its subcellular location is the cytoplasm. The protein resides in the nucleus. In terms of biological role, involved in the chaperone-assisted selective autophagy (CASA), a crucial process for protein quality control, particularly in mechanical strained cells and tissues such as muscle. Displays temperature-dependent chaperone activity. The chain is Heat shock protein beta-8 (HSPB8) from Canis lupus familiaris (Dog).